The chain runs to 366 residues: Isocitrate dehydrogenase [NAD] subunit alpha, mitochondrial (366 aa).

A mitochondrion-targeting transit peptide spans 1-27; the sequence is MAGSAWVSKVSRLLGAFHNTKQVTRGF. Residue lysine 77 is modified to N6-succinyllysine. Residue threonine 101 is modified to Phosphothreonine. Residues arginine 115, arginine 125, and arginine 146 each contribute to the substrate site. An N6-acetyllysine modification is found at lysine 223. The Mg(2+) site is built by aspartate 233, aspartate 257, and aspartate 261. At lysine 343 the chain carries N6-acetyllysine; alternate. At lysine 343 the chain carries N6-succinyllysine; alternate. Position 350 is an N6-succinyllysine (lysine 350).

It belongs to the isocitrate and isopropylmalate dehydrogenases family. In terms of assembly, heterooligomer of subunits alpha (IDH3A), beta (IDH3B), and gamma (IDH3G) in the apparent ratio of 2:1:1. The heterodimer containing one IDH3A and one IDH3B subunit and the heterodimer containing one IDH3A and one IDH3G subunit assemble into a heterotetramer (which contains two subunits of IDH3A, one of IDH3B and one of IDH3G) and further into the heterooctamer. Mg(2+) serves as cofactor. Requires Mn(2+) as cofactor. As to expression, expressed in brown adipose tissue (BAT).

The protein resides in the mitochondrion. It catalyses the reaction D-threo-isocitrate + NAD(+) = 2-oxoglutarate + CO2 + NADH. The heterotetramer and the heterodimer composed of IDH3A and IDH3G subunits can be allosterically activated by citrate (CIT) or/and ADP, and the two activators can act independently or synergistically. The heterodimer composed of IDH3A and IDH3B subunits cannot be allosterically regulated and the allosteric regulation of the heterotetramer is through the IDH3G subunit and not the IDH3B subunit. The IDH3G subunit contains the allosteric site which consists of a CIT-binding site and an ADP-binding site, and the binding of CIT and ADP causes conformational changes at the allosteric site which are transmitted to the active site in the catalytic subunit (IDH3A) through a cascade of conformational changes at the heterodimer interface, leading to stabilization of the isocitrate-binding at the active site and thus activation of the enzyme. ATP can activate the heterotetramer and the heterodimer composed of IDH3A and IDH3G subunits at low concentrations but inhibits their activities at high concentrations, whereas ATP exhibits only inhibitory effect on the heterodimer composed of IDH3A and IDH3B subunits. Its function is as follows. Catalytic subunit of the enzyme which catalyzes the decarboxylation of isocitrate (ICT) into alpha-ketoglutarate. The heterodimer composed of the alpha (IDH3A) and beta (IDH3B) subunits and the heterodimer composed of the alpha (IDH3A) and gamma (IDH3G) subunits, have considerable basal activity but the full activity of the heterotetramer (containing two subunits of IDH3A, one of IDH3B and one of IDH3G) requires the assembly and cooperative function of both heterodimers. This chain is Isocitrate dehydrogenase [NAD] subunit alpha, mitochondrial, found in Rattus norvegicus (Rat).